The following is a 342-amino-acid chain: Anthranilate phosphoribosyltransferase (342 aa).

5-phospho-alpha-D-ribose 1-diphosphate contacts are provided by residues Gly-90, 93–94, Thr-98, 100–103, 118–126, and Ser-130; these read GS, NIST, and KHGNRRATS. Gly-90 is an anthranilate binding site. A Mg(2+)-binding site is contributed by Ser-102. Asn-121 lines the anthranilate pocket. Position 176 (Arg-176) interacts with anthranilate. Mg(2+) contacts are provided by Asp-235 and Glu-236.

The protein belongs to the anthranilate phosphoribosyltransferase family. In terms of assembly, homodimer. It depends on Mg(2+) as a cofactor.

The catalysed reaction is N-(5-phospho-beta-D-ribosyl)anthranilate + diphosphate = 5-phospho-alpha-D-ribose 1-diphosphate + anthranilate. It functions in the pathway amino-acid biosynthesis; L-tryptophan biosynthesis; L-tryptophan from chorismate: step 2/5. Catalyzes the transfer of the phosphoribosyl group of 5-phosphorylribose-1-pyrophosphate (PRPP) to anthranilate to yield N-(5'-phosphoribosyl)-anthranilate (PRA). This chain is Anthranilate phosphoribosyltransferase, found in Rhodopirellula baltica (strain DSM 10527 / NCIMB 13988 / SH1).